Consider the following 1286-residue polypeptide: ABC transporter B family member 4 (1286 aa).

The interval 1 to 39 is disordered; that stretch reads MASESGLNGDPNILEEVSETKRDKEEEEEVKKTEKKDEE. Positions 18–39 are enriched in basic and acidic residues; it reads SETKRDKEEEEEVKKTEKKDEE. Residues 60–80 form a helical membrane-spanning segment; it reads FLLMILGTLGSIGNGLGFPLM. Residues 63 to 349 form the ABC transmembrane type-1 1 domain; it reads MILGTLGSIG…TSPCLSAFAA (287 aa). N-linked (GlcNAc...) asparagine glycosylation is found at Asn-94 and Asn-97. Transmembrane regions (helical) follow at residues 109 to 129, 186 to 206, 208 to 228, 288 to 308, and 317 to 337; these read FVWL…GWMI, IQLL…GWLL, LVML…AIVI, GLGL…AVWY, and GYTG…SMSL. Residues 384–620 enclose the ABC transporter 1 domain; that stretch reads IELKDVYFTY…PEGAYSQLIR (237 aa). 419–426 lines the ATP pocket; it reads GQSGSGKS. 2 N-linked (GlcNAc...) asparagine glycosylation sites follow: Asn-500 and Asn-571. Basic and acidic residues predominate over residues 625–636; it reads KKSDENAAEEQK. The tract at residues 625–669 is disordered; the sequence is KKSDENAAEEQKMSSIESFKQSSLRKSSLGRSLSKGGSSRGNSSR. The span at 646–669 shows a compositional bias: low complexity; sequence SSLRKSSLGRSLSKGGSSRGNSSR. N-linked (GlcNAc...) asparagine glycosylation occurs at Asn-666. Ser-671 carries the phosphoserine modification. Positions 720–1007 constitute an ABC transmembrane type-1 2 domain; it reads LILGSISAAA…SSSLSPDSSK (288 aa). 2 helical membrane passes run 721–741 and 764–784; these read ILGS…GILI and IIFM…TFFF. 2 N-linked (GlcNAc...) asparagine glycosylation sites follow: Asn-816 and Asn-846. The next 4 membrane-spanning stretches (helical) occupy residues 850–870, 871–891, 942–962, and 976–996; these read ILAG…VVLA, MLPL…GFSA, GIVS…SYAA, and TTFD…MAIS. The ABC transporter 2 domain occupies 1042–1279; the sequence is IELRHVSFKY…KDGVYASLVQ (238 aa). 1077–1084 lines the ATP pocket; the sequence is GESGSGKS. N-linked (GlcNAc...) asparagine glycans are attached at residues Asn-1131 and Asn-1230.

The protein belongs to the ABC transporter superfamily. ABCB family. Multidrug resistance exporter (TC 3.A.1.201) subfamily. In terms of assembly, interacts with 1-naphthylphthalamic acid (NPA). Post-translationally, phosphorylation level varies significantly during early response to bacterial elicitor. Mostly expressed in roots, especially in the root elongation zone and lateral roots. In mature portion of the root, expressed in the epidermis and cortex. In the root elongation zone, confined to epidermis. In root tips, present in the root cap, S3 columella and epidermal cells.

It localises to the cell membrane. Functionally, auxin influx transporter that mediates the transport of auxin in roots. Contributes to the basipetal transport in hypocotyls and root tips by establishing an auxin uptake sink in the root cap. Confers sensitivity to 1-N-naphthylphthalamic acid (NPA). Regulates the root elongation, the initiation of lateral roots and the development of root hairs. Can transport IAA, indole-3-propionic acid, NPA syringic acid, vanillic acid and some auxin metabolites, but not 2,4-D and 1-naphthaleneacetic acid. This is ABC transporter B family member 4 (ABCB4) from Arabidopsis thaliana (Mouse-ear cress).